Reading from the N-terminus, the 2275-residue chain is Serine-rich adhesin for platelets (2275 aa).

An N-terminal signal peptide occupies residues 1-89; that stretch reads MSKRQKEFHD…VNMLHDQQAF (89 aa). Positions 90–230 are serine-rich repeat region 1, SRR1; sequence AASDAPLTSE…KTSTTSTSTA (141 aa). Positions 100–111 are enriched in polar residues; sequence LNTQSETVGNQN. Disordered regions lie at residues 100–229 and 751–2247; these read LNTQ…STST and NSMS…GLLG. Low complexity predominate over residues 112-128; it reads STTIEASTSTADSTSVT. Polar residues predominate over residues 129–140; that stretch reads KNSSSVQTSNSD. Residues 150-229 are compositionally biased toward low complexity; sequence VTSTTNSTSN…NKTSTTSTST (80 aa). The interval 231–751 is non-repeat region (NRR); it reads PVKLRTFSRL…TTFKYEVTRN (521 aa). Low complexity-rich tracts occupy residues 752 to 1392 and 1402 to 2218; these read SMSD…LSLS and SNSA…ATSE. Residues 752–2236 are serine-rich repeat region 2, SRR2; that stretch reads SMSDSVSTSG…AQSEKRLPDT (1485 aa). Residues 2233–2237 carry the LPXTG sorting signal motif; that stretch reads LPDTG. Pentaglycyl murein peptidoglycan amidated threonine is present on Thr-2236. Residues 2237–2275 constitute a propeptide, removed by sortase; sequence GDSIKQNGLLGGVMTLLVGLGLMKRKKKKDENDQDDSQA.

It belongs to the serine-rich repeat protein (SRRP) family. Proteolytically cleaved by a metalloprotease. In terms of processing, glycosylated. It is probable that most of the Ser residues in SSR1 and SSR2 are O-GlcNAcylated. Sequential glycosylation by sugar transferases are able to generate complex sugar polymorphisms.

The protein localises to the secreted. Its subcellular location is the cell wall. In terms of biological role, mediates binding to human platelets, possibly through a receptor-ligand interaction. Probably associated with virulence in endovascular infection. The protein is Serine-rich adhesin for platelets (sraP) of Staphylococcus aureus (strain MSSA476).